Here is a 277-residue protein sequence, read N- to C-terminus: B3 domain-containing protein At3g19184 (277 aa).

The tract at residues 33–94 (QSLRVSSSSS…LERRPRRSSR (62 aa)) is disordered. The TF-B3 DNA-binding region spans 130–221 (FTKPMLQSHV…TFKVYIIRVN (92 aa)). Residues 224-250 (ANNDSDGNEVNDDDSDGNEEDRDNDNE) are compositionally biased toward acidic residues. Residues 224–277 (ANNDSDGNEVNDDDSDGNEEDRDNDNESNEKQKETVSEGRQLRSSGKRKRRGRK) are disordered. Basic and acidic residues predominate over residues 251–264 (SNEKQKETVSEGRQ). A compositionally biased stretch (basic residues) spans 268-277 (SGKRKRRGRK).

It localises to the nucleus. The sequence is that of B3 domain-containing protein At3g19184 from Arabidopsis thaliana (Mouse-ear cress).